The chain runs to 248 residues: Phycocyanobilin:ferredoxin oxidoreductase (248 aa).

It belongs to the HY2 family.

It carries out the reaction (2R,3Z)-phycocyanobilin + 4 oxidized [2Fe-2S]-[ferredoxin] = biliverdin IXalpha + 4 reduced [2Fe-2S]-[ferredoxin] + 4 H(+). Catalyzes the four-electron reduction of biliverdin IX-alpha (2-electron reduction at both the A and D rings); the reaction proceeds via an isolatable 2-electron intermediate, 181,182-dihydrobiliverdin. This is Phycocyanobilin:ferredoxin oxidoreductase (pcyA) from Synechococcus elongatus (strain ATCC 33912 / PCC 7942 / FACHB-805) (Anacystis nidulans R2).